Reading from the N-terminus, the 110-residue chain is Putative caspase recruitment domain-containing protein 17P (110 aa).

A CARD domain is found at 1 to 91 (MADKVLKEKR…HLAGTLGLSA (91 aa)).

In terms of assembly, interacts with pro-CASP1. Ubiquitous.

The protein resides in the cytoplasm. Functionally, regulator of procaspase-1/CASP1 activation implicated in the regulation of the proteolytic maturation of pro-IL-1beta/IL1B and its release during inflammation. Inhibits the release of IL1B in response to LPS in monocytes. However, unlike CASP1, do not induce NF-kappa-B activation. This is Putative caspase recruitment domain-containing protein 17P (CARD17P) from Homo sapiens (Human).